Here is a 345-residue protein sequence, read N- to C-terminus: DNA-directed RNA polymerase subunit alpha (345 aa).

Residues 1 to 234 (MRKNEMSTSK…DLLTTFLYVR (234 aa)) are alpha N-terminal domain (alpha-NTD). Residues 266–345 (LEERVLENRF…DKKIVLNRRK (80 aa)) form an alpha C-terminal domain (alpha-CTD) region.

Belongs to the RNA polymerase alpha chain family. In terms of assembly, in plastids the minimal PEP RNA polymerase catalytic core is composed of four subunits: alpha, beta, beta', and beta''. When a (nuclear-encoded) sigma factor is associated with the core the holoenzyme is formed, which can initiate transcription.

It is found in the plastid. The protein resides in the chloroplast. It catalyses the reaction RNA(n) + a ribonucleoside 5'-triphosphate = RNA(n+1) + diphosphate. DNA-dependent RNA polymerase catalyzes the transcription of DNA into RNA using the four ribonucleoside triphosphates as substrates. In Adiantum capillus-veneris (Maidenhair fern), this protein is DNA-directed RNA polymerase subunit alpha.